The primary structure comprises 185 residues: Chromobox protein homolog 1 (185 aa).

Residues Lys9 and Lys33 each participate in a glycyl lysine isopeptide (Lys-Gly) (interchain with G-Cter in SUMO2) cross-link. The region spanning 21 to 79 (YVVEKVLDRRVVKGKVEYLLKWKGFSDEDNTWEPEENLDCPDLIAEFLQSQKTAHETDK) is the Chromo 1 domain. Residues 63–124 (LIAEFLQSQK…RGLEPERIIG (62 aa)) are disordered. Residues 73–89 (TAHETDKSEGGKRKADS) are compositionally biased toward basic and acidic residues. 2 positions are modified to phosphoserine: Ser89 and Ser91. Basic and acidic residues predominate over residues 96–121 (EESKPKKKKEESEKPRGFARGLEPER). Glycyl lysine isopeptide (Lys-Gly) (interchain with G-Cter in SUMO2) cross-links involve residues Lys99 and Lys150. A Chromo 2; shadow subtype domain is found at 117–175 (LEPERIIGATDSSGELMFLMKWKNSDEADLVPAKEANVKCPQVVISFYEERLTWHSYPS). Ser175 is modified (phosphoserine).

As to quaternary structure, homodimer. Interacts directly with CHAF1A, EMSY, LBR, TIF1/TIF1A and TRIM28/TIF1B PXVXL motif via the chromoshadow domain. Interacts directly with histone H3 methylated at 'Lys-9' via the chromo domain. Interacts with SUV39H1 and SETDB1, KMT5B and KMT5C. Interacts with PRDM6. Interacts with POGZ. Interacts with CHAMP1. Interacts with INCENP. Interacts with SGO1; the CBX1 homodimer binds to one molecule of SGO1. Interacts with LRIF1 (via PxVxL motif). Interacts with HDGFL2. Interacts with CHD3. Interacts with CHD4. Post-translationally, not phosphorylated. Ubiquitinated. In terms of tissue distribution, expressed in all adult and embryonic tissues.

It is found in the nucleus. Its function is as follows. Component of heterochromatin. Recognizes and binds histone H3 tails methylated at 'Lys-9', leading to epigenetic repression. Interaction with lamin B receptor (LBR) can contribute to the association of the heterochromatin with the inner nuclear membrane. The sequence is that of Chromobox protein homolog 1 (CBX1) from Homo sapiens (Human).